Here is a 405-residue protein sequence, read N- to C-terminus: Arginine deiminase (405 aa).

Cys395 acts as the Amidino-cysteine intermediate in catalysis.

Belongs to the arginine deiminase family.

It localises to the cytoplasm. The enzyme catalyses L-arginine + H2O = L-citrulline + NH4(+). It functions in the pathway amino-acid degradation; L-arginine degradation via ADI pathway; carbamoyl phosphate from L-arginine: step 1/2. This Rhodococcus opacus (strain B4) protein is Arginine deiminase.